A 595-amino-acid polypeptide reads, in one-letter code: Inactive metallocarboxypeptidase ecm14 (595 aa).

Residues 1-22 (MYRPDHVFVILCAVFFTGQVTA) form the signal peptide. The propeptide occupies 23–178 (VPAGTGITHP…MIYESQYPSR (156 aa)). Residues 206 to 527 (NYQPFPVILQ…NSVLVLGHFL (322 aa)) form the Peptidase M14 domain. Zn(2+)-binding residues include H270 and E273. Residues 270–273 (HARE), R328, and 345–346 (DR) each bind substrate. C339 and C362 form a disulfide bridge. The N-linked (GlcNAc...) asparagine glycan is linked to N386. Residue H402 coordinates Zn(2+). 403 to 404 (SY) lines the substrate pocket.

The protein belongs to the peptidase M14 family. Zn(2+) serves as cofactor.

Its subcellular location is the vacuole. The protein resides in the secreted. In terms of biological role, inactive carboxypeptidase that may play a role in cell wall organization and biogenesis. In Talaromyces marneffei (strain ATCC 18224 / CBS 334.59 / QM 7333) (Penicillium marneffei), this protein is Inactive metallocarboxypeptidase ecm14 (ecm14).